Here is a 419-residue protein sequence, read N- to C-terminus: Glutamyl-tRNA reductase (419 aa).

Substrate is bound by residues 49 to 52 (TCNR), Ser107, 112 to 114 (EPQ), and Gln118. The active-site Nucleophile is the Cys50. Residue 187 to 192 (GAGETI) participates in NADP(+) binding.

Belongs to the glutamyl-tRNA reductase family. In terms of assembly, homodimer.

The catalysed reaction is (S)-4-amino-5-oxopentanoate + tRNA(Glu) + NADP(+) = L-glutamyl-tRNA(Glu) + NADPH + H(+). It functions in the pathway porphyrin-containing compound metabolism; protoporphyrin-IX biosynthesis; 5-aminolevulinate from L-glutamyl-tRNA(Glu): step 1/2. Functionally, catalyzes the NADPH-dependent reduction of glutamyl-tRNA(Glu) to glutamate 1-semialdehyde (GSA). This is Glutamyl-tRNA reductase from Psychromonas ingrahamii (strain DSM 17664 / CCUG 51855 / 37).